Here is a 406-residue protein sequence, read N- to C-terminus: Outer membrane protein assembly factor BamB (406 aa).

Residues Met1–Gly23 form the signal peptide. Cys24 carries N-palmitoyl cysteine lipidation. Cys24 carries S-diacylglycerol cysteine lipidation.

Belongs to the BamB family. As to quaternary structure, part of the Bam complex.

It is found in the cell outer membrane. Its function is as follows. Part of the outer membrane protein assembly complex, which is involved in assembly and insertion of beta-barrel proteins into the outer membrane. This is Outer membrane protein assembly factor BamB from Xanthomonas campestris pv. campestris (strain ATCC 33913 / DSM 3586 / NCPPB 528 / LMG 568 / P 25).